Reading from the N-terminus, the 349-residue chain is UPF0284 protein MM_0708 (349 aa).

This sequence belongs to the UPF0284 family.

The chain is UPF0284 protein MM_0708 from Methanosarcina mazei (strain ATCC BAA-159 / DSM 3647 / Goe1 / Go1 / JCM 11833 / OCM 88) (Methanosarcina frisia).